The primary structure comprises 270 residues: Gap junction beta-3 protein (270 aa).

The Cytoplasmic segment spans residues 1-20 (MDWKKLQDLLSGVNQYSTAF). A helical transmembrane segment spans residues 21–40 (GRIWLSVVFVFRVLVYVVAA). Over 41–75 (ERVWGDEQKDFDCNTRQPGCTNVCYDNFFPISNIR) the chain is Extracellular. A helical membrane pass occupies residues 76–98 (LWALQLIFVTCPSMLVILHVAYR). Topologically, residues 99–126 (EERERKHRQKHGEQCAKLYSHPGKKHGG) are cytoplasmic. A helical membrane pass occupies residues 127 to 149 (LWWTYLFSLIFKLIIELVFLYVL). Topologically, residues 150 to 188 (HTLWHGFTMPRLVQCASIVPCPNTVDCYIARPTEKKVFT) are extracellular. The chain crosses the membrane as a helical span at residues 189–211 (YFMVGASAVCIILTICEICYLIF). At 212 to 270 (HRIMRGISKGKSTKSISSPKSSSRASTCRCHHKLLESGDPEADPASEKLQASAPSLTPI) the chain is on the cytoplasmic side. The disordered stretch occupies residues 246 to 270 (LESGDPEADPASEKLQASAPSLTPI).

Belongs to the connexin family. Beta-type (group I) subfamily. In terms of assembly, a connexon is composed of a hexamer of connexins. Interacts with CNST.

It is found in the cell membrane. The protein localises to the cell junction. Its subcellular location is the gap junction. In terms of biological role, one gap junction consists of a cluster of closely packed pairs of transmembrane channels, the connexons, through which materials of low MW diffuse from one cell to a neighboring cell. The sequence is that of Gap junction beta-3 protein (Gjb3) from Mus musculus (Mouse).